Reading from the N-terminus, the 478-residue chain is Protein nucleotidyltransferase YdiU (478 aa).

The ATP site is built by Gly84, Gly86, Arg87, Lys107, Asp119, Gly120, Arg170, and Arg177. The Proton acceptor role is filled by Asp246. Mg(2+)-binding residues include Asn247 and Asp256. ATP is bound at residue Asp256.

It belongs to the SELO family. Mg(2+) is required as a cofactor. It depends on Mn(2+) as a cofactor.

The enzyme catalyses L-seryl-[protein] + ATP = 3-O-(5'-adenylyl)-L-seryl-[protein] + diphosphate. It catalyses the reaction L-threonyl-[protein] + ATP = 3-O-(5'-adenylyl)-L-threonyl-[protein] + diphosphate. The catalysed reaction is L-tyrosyl-[protein] + ATP = O-(5'-adenylyl)-L-tyrosyl-[protein] + diphosphate. It carries out the reaction L-histidyl-[protein] + UTP = N(tele)-(5'-uridylyl)-L-histidyl-[protein] + diphosphate. The enzyme catalyses L-seryl-[protein] + UTP = O-(5'-uridylyl)-L-seryl-[protein] + diphosphate. It catalyses the reaction L-tyrosyl-[protein] + UTP = O-(5'-uridylyl)-L-tyrosyl-[protein] + diphosphate. Functionally, nucleotidyltransferase involved in the post-translational modification of proteins. It can catalyze the addition of adenosine monophosphate (AMP) or uridine monophosphate (UMP) to a protein, resulting in modifications known as AMPylation and UMPylation. The chain is Protein nucleotidyltransferase YdiU from Escherichia coli O139:H28 (strain E24377A / ETEC).